We begin with the raw amino-acid sequence, 94 residues long: Small ribosomal subunit protein bS6 (94 aa).

Belongs to the bacterial ribosomal protein bS6 family.

In terms of biological role, binds together with bS18 to 16S ribosomal RNA. The chain is Small ribosomal subunit protein bS6 from Alkaliphilus metalliredigens (strain QYMF).